A 91-amino-acid chain; its full sequence is Sec-independent protein translocase protein TatA (91 aa).

The helical transmembrane segment at 1–21 (MGAMQPMHWLIVAVVVVILFG) threads the bilayer.

The protein belongs to the TatA/E family. In terms of assembly, the Tat system comprises two distinct complexes: a TatABC complex, containing multiple copies of TatA, TatB and TatC subunits, and a separate TatA complex, containing only TatA subunits. Substrates initially bind to the TatABC complex, which probably triggers association of the separate TatA complex to form the active translocon.

It localises to the cell membrane. Functionally, part of the twin-arginine translocation (Tat) system that transports large folded proteins containing a characteristic twin-arginine motif in their signal peptide across membranes. TatA could form the protein-conducting channel of the Tat system. The polypeptide is Sec-independent protein translocase protein TatA (Rhodococcus erythropolis (strain PR4 / NBRC 100887)).